The chain runs to 606 residues: UvrABC system protein C (606 aa).

One can recognise a GIY-YIG domain in the interval 18-96 (SQPGVYRMMN…IKSLNPRYNI (79 aa)). In terms of domain architecture, UVR spans 205-240 (TEVLKSITRKMHEAAEEQEYEQAALFRDQIQSLRKI).

The protein belongs to the UvrC family. As to quaternary structure, interacts with UvrB in an incision complex.

The protein localises to the cytoplasm. Its function is as follows. The UvrABC repair system catalyzes the recognition and processing of DNA lesions. UvrC both incises the 5' and 3' sides of the lesion. The N-terminal half is responsible for the 3' incision and the C-terminal half is responsible for the 5' incision. This Nitrosospira multiformis (strain ATCC 25196 / NCIMB 11849 / C 71) protein is UvrABC system protein C.